The chain runs to 120 residues: C-C motif chemokine 16 (120 aa).

A signal peptide spans 1 to 23; it reads MKVSEAALSLLVLILIITSASRS. Intrachain disulfides connect cysteine 37–cysteine 60 and cysteine 38–cysteine 76.

This sequence belongs to the intercrine beta (chemokine CC) family. As to expression, mainly expressed in liver, also found in spleen and thymus. Highly expressed in LPS- and IFN-gamma-activated monocytes, weakly in some lymphocytes, including natural killer cells, gamma-delta T-cells, and some T-cell clones.

It localises to the secreted. Shows chemotactic activity for lymphocytes and monocytes but not neutrophils. Also shows potent myelosuppressive activity, suppresses proliferation of myeloid progenitor cells. Recombinant SCYA16 shows chemotactic activity for monocytes and THP-1 monocytes, but not for resting lymphocytes and neutrophils. Induces a calcium flux in THP-1 cells that were desensitized by prior expression to RANTES. This is C-C motif chemokine 16 (CCL16) from Homo sapiens (Human).